Consider the following 450-residue polypeptide: ATP-dependent protease ATPase subunit HslU (450 aa).

Residues Ile-18 and 60 to 65 (GVGKTE) each bind ATP. Polar residues predominate over residues 140–151 (KTSSSGWAQQQE). A disordered region spans residues 140–162 (KTSSSGWAQQQEETPENDDQRGT). ATP contacts are provided by Asp-263, Glu-328, and Arg-400.

Belongs to the ClpX chaperone family. HslU subfamily. A double ring-shaped homohexamer of HslV is capped on each side by a ring-shaped HslU homohexamer. The assembly of the HslU/HslV complex is dependent on binding of ATP.

It is found in the cytoplasm. In terms of biological role, ATPase subunit of a proteasome-like degradation complex; this subunit has chaperone activity. The binding of ATP and its subsequent hydrolysis by HslU are essential for unfolding of protein substrates subsequently hydrolyzed by HslV. HslU recognizes the N-terminal part of its protein substrates and unfolds these before they are guided to HslV for hydrolysis. This Idiomarina loihiensis (strain ATCC BAA-735 / DSM 15497 / L2-TR) protein is ATP-dependent protease ATPase subunit HslU.